We begin with the raw amino-acid sequence, 432 residues long: Adenylosuccinate synthetase (432 aa).

GTP-binding positions include 12–18 (GDEGKGK) and 40–42 (GHT). The active-site Proton acceptor is Asp-13. Mg(2+) is bound by residues Asp-13 and Gly-40. Residues 13–16 (DEGK), 38–41 (NAGH), Thr-132, Arg-146, Gln-226, Thr-241, and Arg-305 contribute to the IMP site. His-41 (proton donor) is an active-site residue. Residue 301 to 307 (TVTGRKR) participates in substrate binding. GTP is bound by residues Arg-307, 333–335 (KLD), and 415–417 (STS).

Belongs to the adenylosuccinate synthetase family. In terms of assembly, homodimer. Mg(2+) serves as cofactor.

It localises to the cytoplasm. It carries out the reaction IMP + L-aspartate + GTP = N(6)-(1,2-dicarboxyethyl)-AMP + GDP + phosphate + 2 H(+). It functions in the pathway purine metabolism; AMP biosynthesis via de novo pathway; AMP from IMP: step 1/2. Its function is as follows. Plays an important role in the de novo pathway of purine nucleotide biosynthesis. Catalyzes the first committed step in the biosynthesis of AMP from IMP. The protein is Adenylosuccinate synthetase of Rhizobium etli (strain ATCC 51251 / DSM 11541 / JCM 21823 / NBRC 15573 / CFN 42).